The following is a 495-amino-acid chain: Neuronal acetylcholine receptor subunit beta-4 (495 aa).

Positions 1–20 are cleaved as a signal peptide; the sequence is MRGTPLLLVSLFALLQPGDC. Residues 21–235 lie on the Extracellular side of the membrane; that stretch reads RLANAEEKLM…IIKRKPLFYT (215 aa). N-linked (GlcNAc...) asparagine glycosylation is found at N35, N92, N137, and N165. C152 and C166 are disulfide-bonded. A helical transmembrane segment spans residues 236 to 256; that stretch reads INLIIPCVLITSLAILVFYLP. Topologically, residues 257–264 are cytoplasmic; sequence SDCGEKMT. E261 is a Na(+) binding site. A helical transmembrane segment spans residues 265–285; sequence LCISVLLALTFFLLLISKIVP. Residues 286–297 lie on the Extracellular side of the membrane; that stretch reads PTSLDIPLIGKY. The helical transmembrane segment at 298–318 threads the bilayer; sequence LLFTMVLVTFSIVTTVCVLNV. Residues 319–463 are Cytoplasmic-facing; that stretch reads HHRSPSTHTM…WKFVAMVVDR (145 aa). Residues 464–484 traverse the membrane as a helical segment; that stretch reads LFLWVFVIVCILGTMGLFLPP. Residues 485 to 495 lie on the Extracellular side of the membrane; sequence LFQIHAPSKGL.

This sequence belongs to the ligand-gated ion channel (TC 1.A.9) family. Acetylcholine receptor (TC 1.A.9.1) subfamily. Beta-4/CHRNB4 sub-subfamily. In terms of assembly, neuronal AChR is composed of two different types of subunits: alpha and beta. CHRNB4/Beta-4 subunit can be combined to CHRNA2/alpha-2, CHRNA3/alpha-3 or CHRNA4/alpha-4, CHRNA5/alpha-5 and CHRNB3/beta-3 to give rise to functional receptors. Forms stoichiometries such as (CHRNA3)2:(CHRNB4)3 or (CHRNA3:CHRNB4)2:CHRNB3. Interacts with RIC3; which is required for proper folding and assembly. Interacts with LYPD6. As to expression, predominantly expressed by immature T-cells in the thymus.

The protein resides in the synaptic cell membrane. It is found in the cell membrane. It catalyses the reaction K(+)(in) = K(+)(out). The enzyme catalyses Na(+)(in) = Na(+)(out). The catalysed reaction is Ca(2+)(in) = Ca(2+)(out). Activated by a myriad of ligands such as acetylcholine, cytisine, nicotine, choline and epibatidine. The heteropentamer CHRNA3:CHRNB4 activity is blocked by the alpha-conotoxin ImI and AuIB. Functionally, component of neuronal acetylcholine receptors (nAChRs) that function as pentameric, ligand-gated cation channels with high calcium permeability among other activities. nAChRs are excitatory neurotrasnmitter receptors formed by a collection of nAChR subunits known to mediate synaptic transmission in the nervous system and the neuromuscular junction. Each nAchR subunit confers differential attributes to channel properties, including activation, deactivation and desensitization kinetics, pH sensitivity, cation permeability, and binding to allosteric modulators. CHRNB4 forms heteropentameric neuronal acetylcholine receptors with CHRNA2, CHRNA3 and CHRNA4, as well as CHRNA5 and CHRNB3 as accesory subunits. CHRNA3:CHRNB4 being predominant in neurons of the autonomic ganglia, it is known as ganglionic nicotinic receptor. CHRNA3:CHRNB4 or CHRNA3:CHRNA5:CHRNB4 play also an important role in the habenulo-interpeduncular tract, modulating the mesolimbic dopamine system and affecting reward circuits and addiction. Hypothalamic CHRNA3:CHRNB4 nAChR activation by nicotine leads to activation of POMC neurons and a decrease in food intake. The chain is Neuronal acetylcholine receptor subunit beta-4 (Chrnb4) from Mus musculus (Mouse).